The primary structure comprises 378 residues: tRNA N(3)-cytidine methyltransferase METTL2B (378 aa).

Residue alanine 2 is modified to N-acetylalanine. Serine 4 carries the phosphoserine modification. S-adenosyl-L-methionine-binding residues include tryptophan 78 and tyrosine 82. Phosphothreonine is present on threonine 154. S-adenosyl-L-methionine contacts are provided by glycine 188, aspartate 213, aspartate 239, leucine 240, and isoleucine 260.

The protein belongs to the methyltransferase superfamily. METL family. Monomer. Interacts with DALRD3.

The protein resides in the cytoplasm. The enzyme catalyses cytidine(32) in tRNA(Thr) + S-adenosyl-L-methionine = N(3)-methylcytidine(32) in tRNA(Thr) + S-adenosyl-L-homocysteine + H(+). It catalyses the reaction cytidine(32) in tRNA(Arg)(CCU) + S-adenosyl-L-methionine = N(3)-methylcytidine(32) in tRNA(Arg)(CCU) + S-adenosyl-L-homocysteine + H(+). In terms of biological role, S-adenosyl-L-methionine-dependent methyltransferase that mediates N(3)-methylcytidine modification of residue 32 of the tRNA anticodon loop of tRNA(Thr)(UGU) and tRNA(Arg)(CCU). This is tRNA N(3)-cytidine methyltransferase METTL2B from Homo sapiens (Human).